Consider the following 458-residue polypeptide: Phosphomethylpyrimidine synthase (458 aa).

Substrate is bound by residues N80, M109, Y139, H175, 195–197, 236–239, and E275; these read SRG and DSLR. Zn(2+) is bound at residue H279. Position 302 (Y302) interacts with substrate. H343 lines the Zn(2+) pocket. Residues C423, C426, and C431 each coordinate [4Fe-4S] cluster.

The protein belongs to the ThiC family. The cofactor is [4Fe-4S] cluster.

It carries out the reaction 5-amino-1-(5-phospho-beta-D-ribosyl)imidazole + S-adenosyl-L-methionine = 4-amino-2-methyl-5-(phosphooxymethyl)pyrimidine + CO + 5'-deoxyadenosine + formate + L-methionine + 3 H(+). It functions in the pathway cofactor biosynthesis; thiamine diphosphate biosynthesis. Functionally, catalyzes the synthesis of the hydroxymethylpyrimidine phosphate (HMP-P) moiety of thiamine from aminoimidazole ribotide (AIR) in a radical S-adenosyl-L-methionine (SAM)-dependent reaction. The polypeptide is Phosphomethylpyrimidine synthase (Acaryochloris marina (strain MBIC 11017)).